Reading from the N-terminus, the 588-residue chain is A-type ATP synthase subunit A (588 aa).

ATP is bound at residue 237–244 (GPFGSGKT).

Belongs to the ATPase alpha/beta chains family. Has multiple subunits with at least A(3), B(3), C, D, E, F, H, I and proteolipid K(x).

It localises to the cell membrane. The catalysed reaction is ATP + H2O + 4 H(+)(in) = ADP + phosphate + 5 H(+)(out). Functionally, component of the A-type ATP synthase that produces ATP from ADP in the presence of a proton gradient across the membrane. The A chain is the catalytic subunit. The polypeptide is A-type ATP synthase subunit A (Methanoregula boonei (strain DSM 21154 / JCM 14090 / 6A8)).